A 276-amino-acid chain; its full sequence is Release factor glutamine methyltransferase (276 aa).

Residues 116-120 (GTGTG), Asp139, Trp167, and Asn182 each bind S-adenosyl-L-methionine. 182–185 (NPPY) lines the substrate pocket.

The protein belongs to the protein N5-glutamine methyltransferase family. PrmC subfamily.

It carries out the reaction L-glutaminyl-[peptide chain release factor] + S-adenosyl-L-methionine = N(5)-methyl-L-glutaminyl-[peptide chain release factor] + S-adenosyl-L-homocysteine + H(+). Functionally, methylates the class 1 translation termination release factors RF1/PrfA and RF2/PrfB on the glutamine residue of the universally conserved GGQ motif. In Pseudomonas aeruginosa (strain ATCC 15692 / DSM 22644 / CIP 104116 / JCM 14847 / LMG 12228 / 1C / PRS 101 / PAO1), this protein is Release factor glutamine methyltransferase.